The sequence spans 549 residues: Glucose-6-phosphate isomerase (549 aa).

Residues Lys80, Lys228, and Lys234 each carry the N6-acetyllysine modification. Glu355 acts as the Proton donor in catalysis. Residues His386 and Lys514 contribute to the active site.

Belongs to the GPI family.

The protein resides in the cytoplasm. The catalysed reaction is alpha-D-glucose 6-phosphate = beta-D-fructose 6-phosphate. It participates in carbohydrate biosynthesis; gluconeogenesis. Its pathway is carbohydrate degradation; glycolysis; D-glyceraldehyde 3-phosphate and glycerone phosphate from D-glucose: step 2/4. Its function is as follows. Catalyzes the reversible isomerization of glucose-6-phosphate to fructose-6-phosphate. The sequence is that of Glucose-6-phosphate isomerase from Shigella boydii serotype 4 (strain Sb227).